The sequence spans 58 residues: Preprotein translocase subunit SecG (58 aa).

Topologically, residues 1–33 (MARRRKYEGLNPFVAAGLIKFSEEGELEKIKLS) are cytoplasmic. A helical transmembrane segment spans residues 34 to 55 (PKAAIAISLAIIAAILALNLLL). Residues 56–58 (PPP) lie on the Extracellular side of the membrane.

The protein belongs to the SEC61-beta family. As to quaternary structure, component of the protein translocase complex. Heterotrimer consisting of alpha (SecY), beta (SecG) and gamma (SecE) subunits. Can form oligomers of the heterotrimer.

It is found in the cell membrane. Its function is as follows. Involved in protein export. The function of the beta subunit is unknown, but it may be involved in stabilization of the trimeric complex. This Pyrobaculum calidifontis (strain DSM 21063 / JCM 11548 / VA1) protein is Preprotein translocase subunit SecG.